The following is a 336-amino-acid chain: Ribosomal RNA large subunit methyltransferase F (336 aa).

Belongs to the methyltransferase superfamily. METTL16/RlmF family.

The protein localises to the cytoplasm. It carries out the reaction adenosine(1618) in 23S rRNA + S-adenosyl-L-methionine = N(6)-methyladenosine(1618) in 23S rRNA + S-adenosyl-L-homocysteine + H(+). Specifically methylates the adenine in position 1618 of 23S rRNA. The polypeptide is Ribosomal RNA large subunit methyltransferase F (Yersinia pseudotuberculosis serotype I (strain IP32953)).